The chain runs to 367 residues: Dual-specificity RNA methyltransferase RlmN (367 aa).

The active-site Proton acceptor is the Glu-93. Residues 99–333 form the Radical SAM core domain; sequence EEDRATLCVS…VIVRKTRGDD (235 aa). The cysteines at positions 106 and 338 are disulfide-linked. Residues Cys-113, Cys-117, and Cys-120 each contribute to the [4Fe-4S] cluster site. Residues 162-163, Ser-194, 216-218, and Asn-295 contribute to the S-adenosyl-L-methionine site; these read GE and SLH. The active-site S-methylcysteine intermediate is Cys-338.

Belongs to the radical SAM superfamily. RlmN family. The cofactor is [4Fe-4S] cluster.

It localises to the cytoplasm. It catalyses the reaction adenosine(2503) in 23S rRNA + 2 reduced [2Fe-2S]-[ferredoxin] + 2 S-adenosyl-L-methionine = 2-methyladenosine(2503) in 23S rRNA + 5'-deoxyadenosine + L-methionine + 2 oxidized [2Fe-2S]-[ferredoxin] + S-adenosyl-L-homocysteine. The enzyme catalyses adenosine(37) in tRNA + 2 reduced [2Fe-2S]-[ferredoxin] + 2 S-adenosyl-L-methionine = 2-methyladenosine(37) in tRNA + 5'-deoxyadenosine + L-methionine + 2 oxidized [2Fe-2S]-[ferredoxin] + S-adenosyl-L-homocysteine. Specifically methylates position 2 of adenine 2503 in 23S rRNA and position 2 of adenine 37 in tRNAs. m2A2503 modification seems to play a crucial role in the proofreading step occurring at the peptidyl transferase center and thus would serve to optimize ribosomal fidelity. This chain is Dual-specificity RNA methyltransferase RlmN, found in Aeromonas hydrophila subsp. hydrophila (strain ATCC 7966 / DSM 30187 / BCRC 13018 / CCUG 14551 / JCM 1027 / KCTC 2358 / NCIMB 9240 / NCTC 8049).